A 1686-amino-acid polypeptide reads, in one-letter code: Thrombospondin type-1 domain-containing protein 7A (1686 aa).

The first 36 residues, 1–36, serve as a signal peptide directing secretion; that stretch reads MGLASRAPGKGGTSAGALASLFRVALLFFGLWDVQT. The Extracellular segment spans residues 37–1635; it reads QTVANTRPTY…FGPDGKLKTW (1599 aa). TSP type-1 domains follow at residues 44–103, 107–181, and 183–236; these read PTYI…RVCD, ELYD…IPCP, and DCVV…GKCE. N223 is a glycosylation site (N-linked (GlcNAc...) asparagine). Residues 257–321 form a disordered region; the sequence is IRQARDTGEA…EKKRMRDPET (65 aa). Composition is skewed to basic and acidic residues over residues 259-272 and 294-321; these read QARD…PKAE and EKKE…DPET. 16 consecutive TSP type-1 domains span residues 385 to 441, 448 to 535, 537 to 596, 656 to 717, 718 to 797, 799 to 859, 860 to 932, 934 to 985, 988 to 1061, 1063 to 1123, 1124 to 1191, 1193 to 1247, 1248 to 1311, 1313 to 1368, 1369 to 1439, and 1441 to 1502; these read DCEV…SPQG, VVYN…IPCP, ECEV…PSCY, DCVL…HPCT, VYHW…LPCK, DCVV…SVCP, GYRW…LPCQ, DCQL…QYCP, KYNA…IPCP, DCKL…SDCS, QYVW…LPCP, DCVL…SNCF, HYSY…VECP, NCQL…KPCF, SWRY…VPCP, and ECYL…GQCY. Intrachain disulfides connect C460–C530, C480–C534, and C491–C519. N475 carries N-linked (GlcNAc...) asparagine glycosylation. Residue N525 is glycosylated (N-linked (GlcNAc...) asparagine). Cystine bridges form between C657-C699 and C668-C672. Residue N701 is glycosylated (N-linked (GlcNAc...) asparagine). 7 disulfide bridges follow: C711–C716, C729–C792, C756–C796, C767–C780, C800–C842, C811–C815, and C852–C858. N739 carries an N-linked (GlcNAc...) asparagine glycan. The N-linked (GlcNAc...) asparagine glycan is linked to N996. Cystine bridges form between C1000/C1056, C1022/C1060, C1033/C1046, C1064/C1101, C1075/C1079, and C1118/C1122. N-linked (GlcNAc...) asparagine glycosylation is present at N1071. N1212 is a glycosylation site (N-linked (GlcNAc...) asparagine). The cysteines at positions 1240 and 1246 are disulfide-linked. An N-linked (GlcNAc...) asparagine glycan is attached at N1252. 12 disulfides stabilise this stretch: C1259–C1306, C1267–C1310, C1278–C1291, C1314–C1352, C1325–C1329, C1362–C1367, C1378–C1434, C1385–C1438, C1396–C1415, C1442–C1486, C1453–C1457, and C1496–C1501. N1303 carries N-linked (GlcNAc...) asparagine glycosylation. N-linked (GlcNAc...) asparagine glycosylation occurs at N1393. N-linked (GlcNAc...) asparagine glycosylation is present at N1527. Residues 1636–1656 form a helical membrane-spanning segment; the sequence is VYGVAAGAFVLLVFIVSMTYL. Topologically, residues 1657 to 1686 are cytoplasmic; it reads ACKKPKKPQRRQMNNRLKPLTLAYDGDADM.

In terms of processing, extensively N-glycosylated.

It is found in the cell membrane. The protein localises to the cell projection. Required for normal sprouting angiogenesis and normal embryonic development of intersegmental vessels (ISV). Required for normal function of the glomerular filtration barrier. Required for normal axon outgrowth on embryonic motor neurons at the level of the horizontal myoseptum. Required for normal expression of notch1b, suggesting that its functions in angiogenesis and neuron outgrowth are due to decreased expression of notch1b. Plays a role in actin cytoskeleton rearrangement. The sequence is that of Thrombospondin type-1 domain-containing protein 7A from Danio rerio (Zebrafish).